Reading from the N-terminus, the 331-residue chain is Phenylalanine--tRNA ligase alpha subunit (331 aa).

A Mg(2+)-binding site is contributed by Glu252.

This sequence belongs to the class-II aminoacyl-tRNA synthetase family. Phe-tRNA synthetase alpha subunit type 1 subfamily. As to quaternary structure, tetramer of two alpha and two beta subunits. Mg(2+) serves as cofactor.

The protein localises to the cytoplasm. The catalysed reaction is tRNA(Phe) + L-phenylalanine + ATP = L-phenylalanyl-tRNA(Phe) + AMP + diphosphate + H(+). This Hahella chejuensis (strain KCTC 2396) protein is Phenylalanine--tRNA ligase alpha subunit.